The primary structure comprises 262 residues: G patch domain-containing protein 11 (262 aa).

Composition is skewed to basic and acidic residues over residues 39–61 (LHKE…ESRE), 114–127 (EEVK…ELQN), and 136–165 (QHLE…DLRK). Disordered regions lie at residues 39-71 (LHKE…IGSQ) and 88-169 (GLGK…SQRA). Positions 41–62 (KEKDIQNRQKSFKEQEKESREA) form a coiled coil. In terms of domain architecture, G-patch spans 70–116 (SQNKGFALLQKMGYKAGQGLGKEGAGRVEPVPLNIKTDRGGIGMEEV).

The protein belongs to the GPATCH11 family.

Its subcellular location is the chromosome. It localises to the centromere. The protein resides in the kinetochore. In Danio rerio (Zebrafish), this protein is G patch domain-containing protein 11 (gpatch11).